The chain runs to 234 residues: Adenosine 5'-phosphosulfate reductase (234 aa).

[4Fe-4S] cluster is bound by residues cysteine 120, cysteine 121, cysteine 203, and cysteine 206. Catalysis depends on cysteine 229, which acts as the Nucleophile; cysteine thiosulfonate intermediate.

Belongs to the PAPS reductase family. CysH subfamily. The cofactor is [4Fe-4S] cluster.

It localises to the cytoplasm. It catalyses the reaction [thioredoxin]-disulfide + sulfite + AMP + 2 H(+) = adenosine 5'-phosphosulfate + [thioredoxin]-dithiol. It participates in sulfur metabolism; hydrogen sulfide biosynthesis; sulfite from sulfate. In terms of biological role, catalyzes the formation of sulfite from adenosine 5'-phosphosulfate (APS) using thioredoxin as an electron donor. The sequence is that of Adenosine 5'-phosphosulfate reductase from Bacillus thuringiensis (strain Al Hakam).